We begin with the raw amino-acid sequence, 513 residues long: Sugar transport protein 7 (513 aa).

At 1-26 (MAGGSFGPTGVAKERAEQYQGKVTSY) the chain is on the cytoplasmic side. Transmembrane regions (helical) follow at residues 27-47 (VIIACLVAAIGGSIFGYDIGI), 84-104 (GLAAFTSSLYLAGLVSTLVAS), 121-141 (ISFLIGSGLNAGAVNLAMLLA), 144-164 (IMLGVGIGFGNQAVPLYLSEV), 171-191 (GGLNMMFQLATTIGIFTANMV), 205-225 (LSLGLAAFPALLMTLGGYFLP), 286-306 (LVMAICMPMFQILTGINSILF), 324-344 (YSSALTGAVLVLSTFISIGLV), 351-371 (ALLITGGIQMIICQVIVAVIL), 387-407 (VIVVIFICLFVVAFGWSWGPL), 427-447 (ITVAVNLLFTFIIAQAFLGLL), and 452-472 (FGIFLFFAGWVTVMTIFVYFL). Over 473–513 (LPETKGVPIEEMTLLWSKHWFWKKVLPDATNLEDESKNVSV) the chain is Cytoplasmic.

Belongs to the major facilitator superfamily. Sugar transporter (TC 2.A.1.1) family.

It localises to the cell membrane. Functionally, mediates an active uptake of hexoses, probably by sugar/hydrogen symport. This chain is Sugar transport protein 7 (STP7), found in Arabidopsis thaliana (Mouse-ear cress).